The following is a 98-amino-acid chain: Peptide YY (98 aa).

An N-terminal signal peptide occupies residues 1-28 (MVAVRRPWPVMVAMLLVLLACLGALVDA). Phosphoserine is present on Ser-41. At Tyr-64 the chain carries Tyrosine amide. The propeptide occupies 68-98 (EVPAALFSKLLFTDDSENLPFRSRPEGVDQW).

It belongs to the NPY family. The peptide YY form is cleaved at Pro-30 by the prolyl endopeptidase FAP (seprase) activity (in vitro) to generate peptide YY(3-36).

It is found in the secreted. This gut peptide inhibits exocrine pancreatic secretion, has a vasoconstrictory action and inhibitis jejunal and colonic mobility. In Rattus norvegicus (Rat), this protein is Peptide YY (Pyy).